The primary structure comprises 275 residues: Phosphonoacetaldehyde hydrolase (275 aa).

Residue D15 is the Nucleophile of the active site. Mg(2+) is bound by residues D15 and A17. K56 acts as the Schiff-base intermediate with substrate in catalysis. D189 is a Mg(2+) binding site.

This sequence belongs to the HAD-like hydrolase superfamily. PhnX family. As to quaternary structure, homodimer. It depends on Mg(2+) as a cofactor.

The enzyme catalyses phosphonoacetaldehyde + H2O = acetaldehyde + phosphate + H(+). Involved in phosphonate degradation. In Pseudomonas entomophila (strain L48), this protein is Phosphonoacetaldehyde hydrolase.